Reading from the N-terminus, the 439-residue chain is Alpha-1,3-mannosyl-glycoprotein 4-beta-N-acetylglucosaminyltransferase-like protein MGAT4E (439 aa).

It participates in protein modification; protein glycosylation. Its function is as follows. Glycosyltransferase-like protein that may participate in the transfer of N-acetylglucosamine (GlcNAc) to the core mannose residues of N-linked glycans. The protein is Alpha-1,3-mannosyl-glycoprotein 4-beta-N-acetylglucosaminyltransferase-like protein MGAT4E of Mus musculus (Mouse).